The primary structure comprises 381 residues: Guanine nucleotide-binding protein subunit alpha-12 (381 aa).

The S-palmitoyl cysteine moiety is linked to residue C11. Positions 56-381 (RLVKILLLGA…QENLKDIMLQ (326 aa)) constitute a G-alpha domain. Positions 59–72 (KILLLGAGESGKST) are G1 motif. Residues 67–72 (ESGKST) and 202–205 (LLAR) each bind GTP. S71 lines the Mg(2+) pocket. Residues 200–208 (DILLARKAT) are G2 motif. T208 lines the Mg(2+) pocket. A Phosphothreonine modification is found at T208. The tract at residues 223–232 (FKMVDVGGQR) is G3 motif. Positions 292-299 (ILFLNKMD) are G4 motif. GTP is bound by residues 296 to 299 (NKMD) and A353. The segment at 351–356 (TTAIDT) is G5 motif.

The protein belongs to the G-alpha family. G(12) subfamily. In terms of assembly, g proteins are composed of 3 units; alpha, beta and gamma. The alpha chain contains the guanine nucleotide binding site. Interacts with UBXD5. Interacts (in GTP-bound form) with PPP5C (via TPR repeats); activates PPP5C phosphatase activity and translocates PPP5C to the cell membrane. Interacts with RGS22. Interacts (via N-terminus) with NAPA; the interaction promotes CDH5 localization to plasma membrane. Interacts with CTNND1 (via N-terminus); the interaction regulates CDH1-mediated cell-cell adhesion. Interacts with PPP2R1A; the interaction promotes protein phosphatase 2A activation causing dephosphorylation of MAPT. Interacts (in GTP-bound form) with ARHGEF1. Interacts (in GTP-bound form) with ARHGEF11 (via RGS domain). Interacts (in GTP-bound form) with ARHGEF12 (via RGS domain).

It localises to the cell membrane. Its subcellular location is the lateral cell membrane. The protein resides in the cytoplasm. Its function is as follows. Guanine nucleotide-binding proteins (G proteins) are involved as modulators or transducers in various transmembrane signaling systems. Activates effector molecule RhoA by binding and activating RhoGEFs (ARHGEF12/LARG). GNA12-dependent Rho signaling subsequently regulates transcription factor AP-1 (activating protein-1). GNA12-dependent Rho signaling also regulates protein phosphatese 2A activation causing dephosphorylation of its target proteins. Promotes tumor cell invasion and metastasis by activating RhoA/ROCK signaling pathway and up-regulating pro-inflammatory cytokine production. Inhibits CDH1-mediated cell adhesion in process independent from Rho activation. Together with NAPA promotes CDH5 localization to plasma membrane. May play a role in the control of cell migration through the TOR signaling cascade. The sequence is that of Guanine nucleotide-binding protein subunit alpha-12 (GNA12) from Homo sapiens (Human).